The chain runs to 277 residues: Large ribosomal subunit protein uL2 (277 aa).

Residues 199-277 form a disordered region; it reads DHMNTSVGKA…ILISRHKRKK (79 aa). A compositionally biased stretch (basic residues) spans 209 to 220; sequence GRTRWMGRRPHN.

Belongs to the universal ribosomal protein uL2 family. As to quaternary structure, part of the 50S ribosomal subunit. Forms a bridge to the 30S subunit in the 70S ribosome.

In terms of biological role, one of the primary rRNA binding proteins. Required for association of the 30S and 50S subunits to form the 70S ribosome, for tRNA binding and peptide bond formation. It has been suggested to have peptidyltransferase activity; this is somewhat controversial. Makes several contacts with the 16S rRNA in the 70S ribosome. This Nitrobacter winogradskyi (strain ATCC 25391 / DSM 10237 / CIP 104748 / NCIMB 11846 / Nb-255) protein is Large ribosomal subunit protein uL2.